Reading from the N-terminus, the 234-residue chain is Large ribosomal subunit protein uL1 (234 aa).

Belongs to the universal ribosomal protein uL1 family. As to quaternary structure, part of the 50S ribosomal subunit.

Functionally, binds directly to 23S rRNA. The L1 stalk is quite mobile in the ribosome, and is involved in E site tRNA release. Its function is as follows. Protein L1 is also a translational repressor protein, it controls the translation of the L11 operon by binding to its mRNA. The chain is Large ribosomal subunit protein uL1 from Pectobacterium carotovorum subsp. carotovorum (strain PC1).